The primary structure comprises 249 residues: Major phosphate-irrepressible acid phosphatase (249 aa).

An N-terminal signal peptide occupies residues 1-20 (MKKNIIAGCLFSLFSLSALA).

It belongs to the class A bacterial acid phosphatase family. As to quaternary structure, homotetramer.

It localises to the periplasm. It carries out the reaction a phosphate monoester + H2O = an alcohol + phosphate. In Morganella morganii (Proteus morganii), this protein is Major phosphate-irrepressible acid phosphatase (phoC).